Consider the following 366-residue polypeptide: 3-dehydroquinate synthase (366 aa).

NAD(+)-binding positions include 73–78 (DGERAK), 107–111 (GVVGD), 131–132 (TT), K144, and K153. 3 residues coordinate Zn(2+): E186, H249, and H266.

Belongs to the sugar phosphate cyclases superfamily. Dehydroquinate synthase family. Requires Co(2+) as cofactor. It depends on Zn(2+) as a cofactor. NAD(+) is required as a cofactor.

It is found in the cytoplasm. The enzyme catalyses 7-phospho-2-dehydro-3-deoxy-D-arabino-heptonate = 3-dehydroquinate + phosphate. It participates in metabolic intermediate biosynthesis; chorismate biosynthesis; chorismate from D-erythrose 4-phosphate and phosphoenolpyruvate: step 2/7. Catalyzes the conversion of 3-deoxy-D-arabino-heptulosonate 7-phosphate (DAHP) to dehydroquinate (DHQ). The polypeptide is 3-dehydroquinate synthase (Koribacter versatilis (strain Ellin345)).